A 106-amino-acid chain; its full sequence is Large ribosomal subunit protein uL24 (106 aa).

Belongs to the universal ribosomal protein uL24 family. In terms of assembly, part of the 50S ribosomal subunit.

One of two assembly initiator proteins, it binds directly to the 5'-end of the 23S rRNA, where it nucleates assembly of the 50S subunit. Its function is as follows. One of the proteins that surrounds the polypeptide exit tunnel on the outside of the subunit. The chain is Large ribosomal subunit protein uL24 from Polaromonas naphthalenivorans (strain CJ2).